The primary structure comprises 340 residues: MAFMRSKPSLGSLARVAFRWCGPGVGLVNYSQEPYLVKAVQGKSKPRSPTLQSAMQPRAQAETIQAPKCFGEDSFFFSSTPKADVMGVADGVGGWRDRGIDAGRFSRDLMQRCFVHAQKPTFDGRNPRQLLSECYGEMKRKWKPILGSSTACVVAFNRSESALYTANLGDSGYVVIRNGSVLDRSEEQTHFFNMPFQLTVPPPDSNREMWFCDDPSEAVATRLLLQPDDLVLVATDGLFDNMPEQMLLEMLSKVQGVHEQKAIQEAVNRVVERAGALSINPIYKSPFCLRALENNVAYGGGGKPDDITVVLASVAMRQCNTVGDSNESKGSDLRPRLSFP.

A PPM-type phosphatase domain is found at 58–314; it reads RAQAETIQAP…DDITVVLASV (257 aa). Mn(2+)-binding residues include D90, G91, and D236.

Belongs to the PP2C family. Mg(2+) serves as cofactor. Mn(2+) is required as a cofactor.

It catalyses the reaction O-phospho-L-seryl-[protein] + H2O = L-seryl-[protein] + phosphate. It carries out the reaction O-phospho-L-threonyl-[protein] + H2O = L-threonyl-[protein] + phosphate. In Drosophila pseudoobscura pseudoobscura (Fruit fly), this protein is Protein phosphatase PTC7 homolog fig.